The sequence spans 447 residues: N-succinylarginine dihydrolase (447 aa).

Substrate contacts are provided by residues 19–28, asparagine 110, and 137–138; these read AGLSFGNEAS and HR. Glutamate 174 is an active-site residue. Arginine 212 lines the substrate pocket. The active site involves histidine 248. Residues aspartate 250 and asparagine 359 each coordinate substrate. Cysteine 365 functions as the Nucleophile in the catalytic mechanism.

The protein belongs to the succinylarginine dihydrolase family. As to quaternary structure, homodimer.

It carries out the reaction N(2)-succinyl-L-arginine + 2 H2O + 2 H(+) = N(2)-succinyl-L-ornithine + 2 NH4(+) + CO2. It participates in amino-acid degradation; L-arginine degradation via AST pathway; L-glutamate and succinate from L-arginine: step 2/5. In terms of biological role, catalyzes the hydrolysis of N(2)-succinylarginine into N(2)-succinylornithine, ammonia and CO(2). The polypeptide is N-succinylarginine dihydrolase (Escherichia coli O81 (strain ED1a)).